Consider the following 368-residue polypeptide: CST complex subunit STN1 (368 aa).

The interval 1-185 (MQPGSSRCEE…KVYDQPFHSS (185 aa)) is interaction with CTC1. Residues 57 to 155 (VDVLGTVIGV…EIHATTYYKV (99 aa)) constitute a DNA-binding region (OB). Winged helix-turn-helix (wHTH) stretches follow at residues 191–295 (EALS…YVTR) and 296–368 (EDKD…YTAF).

Belongs to the STN1 family. As to quaternary structure, component of the CST complex, composed of TEN1/C17orf106, CTC1/C17orf68 and STN1; in the complex interacts directly with TEN1 and CTC1. Interacts with ACD/TPP1, POT1 and POLA1.

The protein localises to the nucleus. It localises to the chromosome. The protein resides in the telomere. In terms of biological role, component of the CST complex proposed to act as a specialized replication factor promoting DNA replication under conditions of replication stress or natural replication barriers such as the telomere duplex. The CST complex binds single-stranded DNA with high affinity in a sequence-independent manner, while isolated subunits bind DNA with low affinity by themselves. Initially the CST complex has been proposed to protect telomeres from DNA degradation. However, the CST complex has been shown to be involved in several aspects of telomere replication. The CST complex inhibits telomerase and is involved in telomere length homeostasis; it is proposed to bind to newly telomerase-synthesized 3' overhangs and to terminate telomerase action implicating the association with the ACD:POT1 complex thus interfering with its telomerase stimulation activity. The CST complex is also proposed to be involved in fill-in synthesis of the telomeric C-strand probably implicating recruitment and activation of DNA polymerase alpha. The CST complex facilitates recovery from many forms of exogenous DNA damage; seems to be involved in the re-initiation of DNA replication at repaired forks and/or dormant origins. Required for efficicient replication of the duplex region of the telomere. Promotes efficient replication of lagging-strand telomeres. Promotes general replication start following replication-fork stalling implicating new origin firing. May be in involved in C-strand fill-in during late S/G2 phase independent of its role in telomere duplex replication. Component of the CST complex, a complex that binds to single-stranded DNA and is required to protect telomeres from DNA degradation. The CST complex binds single-stranded DNA with high affinity in a sequence-independent manner, while isolated subunits bind DNA with low affinity by themselves. In addition to telomere protection, the CST complex has probably a more general role in DNA metabolism at non-telomeric sites. The chain is CST complex subunit STN1 from Homo sapiens (Human).